A 377-amino-acid chain; its full sequence is Membrane progestin receptor epsilon (377 aa).

Residues 1–40 (MPRRLQPRGAGTKGPPAPAPAASGAARNSHSAASRDPPAS) form a disordered region. Residues 1-86 (MPRRLQPRGA…VLKPTNETLN (86 aa)) are Cytoplasmic-facing. Residues 9–26 (GAGTKGPPAPAPAASGAA) show a composition bias toward low complexity. The helical transmembrane segment at 87-107 (FWTHFIPLLLFLSKFCRLFFL) threads the bilayer. The Extracellular portion of the chain corresponds to 108–116 (SGGDVPFHH). Residues 117–137 (PWLLPLWCYASGVLLTFAMSC) form a helical membrane-spanning segment. Topologically, residues 138 to 162 (TAHVFSCLSLRLRAAFFYLDYASIS) are cytoplasmic. A helical membrane pass occupies residues 163 to 183 (YYGFGSTVAYYYYLLPGLSLL). Residues 184–205 (DARVMTPYLQQRLGWHVDCTRL) are Extracellular-facing. The helical transmembrane segment at 206–226 (IAAYRALVLPVAFVLAVACTV) threads the bilayer. Topologically, residues 227–243 (ACCKSRTDWCTYPFALR) are cytoplasmic. A helical membrane pass occupies residues 244 to 264 (TFVFVMPLSMACPIMLESWLF). Over 265 to 301 (DLRGENPTLFVHFYRRYFWLVVAAFFNVSKIPERIQP) the chain is Extracellular. The helical transmembrane segment at 302-322 (GLFDIIGHSHQLFHIFTFLSI) threads the bilayer. Over 323 to 343 (YDQVYYVEEGLRQFLQAPPAA) the chain is Cytoplasmic. The helical transmembrane segment at 344–364 (PTFSGTVGYMLLLVVCLGLVI) threads the bilayer. Residues 365–377 (RKFLNSSEFCSKK) are Extracellular-facing.

It belongs to the ADIPOR family. Homodimer. Expression levels vary widely in a range of tissues. Expressed in the brain, at high level in the pituitary gland and also in hypothalamus, limbic system, caudate nucleus accumens, pons and olfactory bulb.

It localises to the cell membrane. Plasma membrane progesterone (P4) receptor coupled to G proteins. Seems to act through a G(s) mediated pathway. May be involved in regulating rapid P4 signaling in the nervous system. Also binds dehydroepiandrosterone (DHEA), pregnanolone, pregnenolone and allopregnanolone. This Homo sapiens (Human) protein is Membrane progestin receptor epsilon.